Consider the following 375-residue polypeptide: Platelet-derived growth factor receptor-like protein (375 aa).

The N-terminal stretch at M1–G21 is a signal peptide. The tract at residues T20–T64 is disordered. Basic residues predominate over residues P40–P50. Residues P62 to K159 enclose the Ig-like C2-type 1 domain. A disulfide bridge connects residues C96 and C143. N132 and N219 each carry an N-linked (GlcNAc...) asparagine glycan. Positions P272–E373 constitute an Ig-like C2-type 2 domain. A disulfide bond links C293 and C357.

Forms a complex composed of PDGFRL, TNK2 and GRB2.

The protein localises to the secreted. In Bos taurus (Bovine), this protein is Platelet-derived growth factor receptor-like protein (PDGFRL).